Reading from the N-terminus, the 1454-residue chain is Beta-1,3-glucan-binding protein (1454 aa).

A propeptide spanning residues 1–197 (MSFDLTTPFD…KRSLEMRMMN (197 aa)) is cleaved from the precursor. Residues Asn-33, Asn-55, Asn-185, Asn-571, Asn-592, Asn-825, Asn-882, and Asn-1153 are each glycosylated (N-linked (GlcNAc...) asparagine).

Belongs to the glycosyl hydrolase 16 family. In terms of assembly, monomer. In terms of tissue distribution, expressed in the hepatopancreas and secreted into the hemolymph. Expressed at lower levels in muscle, pleopod and gill tissue.

Its subcellular location is the secreted. Involved in the recognition of invading microorganisms. Binds specifically to beta-1,3-glucan and activates the prophenoloxidase cascade. The sequence is that of Beta-1,3-glucan-binding protein from Penaeus vannamei (Whiteleg shrimp).